Here is a 530-residue protein sequence, read N- to C-terminus: Chaperonin GroEL (530 aa).

ATP contacts are provided by residues 30–33, lysine 51, 87–91, glycine 415, and aspartate 495; these read TLGP and DGTTT.

It belongs to the chaperonin (HSP60) family. As to quaternary structure, forms a cylinder of 14 subunits composed of two heptameric rings stacked back-to-back. Interacts with the co-chaperonin GroES.

Its subcellular location is the cytoplasm. It catalyses the reaction ATP + H2O + a folded polypeptide = ADP + phosphate + an unfolded polypeptide.. Functionally, together with its co-chaperonin GroES, plays an essential role in assisting protein folding. The GroEL-GroES system forms a nano-cage that allows encapsulation of the non-native substrate proteins and provides a physical environment optimized to promote and accelerate protein folding. The sequence is that of Chaperonin GroEL from Carsonella ruddii (strain PV).